The primary structure comprises 316 residues: GTPase Era (316 aa).

Residues 9-190 (RAGFAAIIGA…TAKLVSMMPE (182 aa)) enclose the Era-type G domain. A G1 region spans residues 17 to 24 (GAPNAGKS). GTP is bound at residue 17–24 (GAPNAGKS). A G2 region spans residues 43 to 47 (QTTRF). The G3 stretch occupies residues 64 to 67 (DTPG). Residues 64–68 (DTPGI) and 140–143 (NKID) contribute to the GTP site. Residues 140 to 143 (NKID) are G4. The segment at 169 to 171 (ISA) is G5. Residues 221–298 (VHEELPYAAT…HLFLHVKVKE (78 aa)) enclose the KH type-2 domain.

This sequence belongs to the TRAFAC class TrmE-Era-EngA-EngB-Septin-like GTPase superfamily. Era GTPase family. Monomer.

The protein resides in the cytoplasm. It is found in the cell inner membrane. Its function is as follows. An essential GTPase that binds both GDP and GTP, with rapid nucleotide exchange. Plays a role in 16S rRNA processing and 30S ribosomal subunit biogenesis and possibly also in cell cycle regulation and energy metabolism. This chain is GTPase Era, found in Caulobacter vibrioides (strain ATCC 19089 / CIP 103742 / CB 15) (Caulobacter crescentus).